The following is a 204-amino-acid chain: Acyl-homoserine-lactone synthase (204 aa).

This sequence belongs to the autoinducer synthase family.

The catalysed reaction is a fatty acyl-[ACP] + S-adenosyl-L-methionine = an N-acyl-L-homoserine lactone + S-methyl-5'-thioadenosine + holo-[ACP] + H(+). Its function is as follows. Required for the synthesis of acyl-HSL autoinducers that bind to SolR. This Ralstonia nicotianae (strain ATCC BAA-1114 / GMI1000) (Ralstonia solanacearum) protein is Acyl-homoserine-lactone synthase (solI).